The following is a 400-amino-acid chain: Glutamyl-tRNA reductase (400 aa).

Residues 45 to 48 (TCNR), serine 103, 108 to 110 (EDQ), and glutamine 114 contribute to the substrate site. The active-site Nucleophile is cysteine 46. 179-184 (GYGEIG) is an NADP(+) binding site.

The protein belongs to the glutamyl-tRNA reductase family. In terms of assembly, homodimer.

The enzyme catalyses (S)-4-amino-5-oxopentanoate + tRNA(Glu) + NADP(+) = L-glutamyl-tRNA(Glu) + NADPH + H(+). It functions in the pathway porphyrin-containing compound metabolism; protoporphyrin-IX biosynthesis; 5-aminolevulinate from L-glutamyl-tRNA(Glu): step 1/2. Functionally, catalyzes the NADPH-dependent reduction of glutamyl-tRNA(Glu) to glutamate 1-semialdehyde (GSA). This chain is Glutamyl-tRNA reductase, found in Clostridium perfringens (strain ATCC 13124 / DSM 756 / JCM 1290 / NCIMB 6125 / NCTC 8237 / Type A).